A 601-amino-acid chain; its full sequence is UBA domain-containing protein 3 (601 aa).

Positions 7-129 (ETAIRELVQS…LFLDENHSTN (123 aa)) constitute an Arf-GAP domain. Disordered regions lie at residues 123 to 158 (DENHSTNSKPPSLPPRTKSSSQSSPMASTSTSKSRY) and 289 to 310 (EPNQPLQPLRPSMTGPVPSSMG). The segment covering 139 to 156 (TKSSSQSSPMASTSTSKS) has biased composition (low complexity). The UBA domain occupies 157–197 (RYADSLSTLHDMGFSDDSVNTHALEETNGDVTRAIEKIVQH).

The protein is UBA domain-containing protein 3 (ucp3) of Schizosaccharomyces pombe (strain 972 / ATCC 24843) (Fission yeast).